Reading from the N-terminus, the 78-residue chain is Putative defensin-like protein 133 (78 aa).

Positions Met1–Gly24 are cleaved as a signal peptide. 4 cysteine pairs are disulfide-bonded: Cys34/Cys75, Cys44/Cys68, Cys49/Cys72, and Cys53/Cys74.

The protein belongs to the DEFL family.

It localises to the secreted. The protein is Putative defensin-like protein 133 (LCR33) of Arabidopsis thaliana (Mouse-ear cress).